The following is a 341-amino-acid chain: Cathepsin B-like cysteine proteinase 1 (341 aa).

The N-terminal stretch at 1 to 19 is a signal peptide; it reads MKYLFFALCLYLYQGISEA. A propeptide spans 20 to 88 (activation peptide); sequence EVPAEQIPLE…VEDEELEENN (69 aa). Asparagine 103 carries N-linked (GlcNAc...) asparagine glycosylation. 6 disulfides stabilise this stretch: cysteine 104-cysteine 133, cysteine 116-cysteine 160, cysteine 152-cysteine 218, cysteine 153-cysteine 156, cysteine 189-cysteine 222, and cysteine 197-cysteine 209. Residue cysteine 119 is part of the active site. N-linked (GlcNAc...) asparagine glycosylation occurs at asparagine 202. Active-site residues include histidine 288 and asparagine 308.

It belongs to the peptidase C1 family.

Functionally, expression of the protease correlates with blood-feeding and suggests a role for the protease in blood digestion. This is Cathepsin B-like cysteine proteinase 1 (CP-1) from Ostertagia ostertagi (Brown stomach worm).